Reading from the N-terminus, the 522-residue chain is Bifunctional purine biosynthesis protein PurH (522 aa).

The 145-residue stretch at 1 to 145 (MKPIARALIS…KNHAAVTVIV (145 aa)) folds into the MGS-like domain.

It belongs to the PurH family.

The catalysed reaction is (6R)-10-formyltetrahydrofolate + 5-amino-1-(5-phospho-beta-D-ribosyl)imidazole-4-carboxamide = 5-formamido-1-(5-phospho-D-ribosyl)imidazole-4-carboxamide + (6S)-5,6,7,8-tetrahydrofolate. The enzyme catalyses IMP + H2O = 5-formamido-1-(5-phospho-D-ribosyl)imidazole-4-carboxamide. Its pathway is purine metabolism; IMP biosynthesis via de novo pathway; 5-formamido-1-(5-phospho-D-ribosyl)imidazole-4-carboxamide from 5-amino-1-(5-phospho-D-ribosyl)imidazole-4-carboxamide (10-formyl THF route): step 1/1. It functions in the pathway purine metabolism; IMP biosynthesis via de novo pathway; IMP from 5-formamido-1-(5-phospho-D-ribosyl)imidazole-4-carboxamide: step 1/1. This Nitrosococcus oceani (strain ATCC 19707 / BCRC 17464 / JCM 30415 / NCIMB 11848 / C-107) protein is Bifunctional purine biosynthesis protein PurH.